The sequence spans 1365 residues: Serine/threonine-protein kinase LMTK1 (1365 aa).

A helical membrane pass occupies residues 32 to 52 (LAVVAVSFSGIFTVVILMLAC). Positions 126–396 (LLYLKEIGHG…PTAEEVHLLL (271 aa)) constitute a Protein kinase domain. Residues 132 to 140 (IGHGWFGKV) and Lys157 each bind ATP. The Proton acceptor role is filled by Asp254. Ser500 carries the phosphoserine modification. Disordered stretches follow at residues 550 to 623 (PDCA…LPAE), 638 to 698 (DDPL…GYVS), 791 to 1186 (QEAE…PAVP), 1237 to 1293 (ESPT…EWDG), and 1343 to 1365 (ISDS…YTEA). Over residues 560 to 575 (QAVTDQDNNSEESTVA) the composition is skewed to polar residues. Composition is skewed to low complexity over residues 638–655 (DDPL…QPSP) and 675–686 (SSNMSANNNSAS). Polar residues-rich tracts occupy residues 848-860 (LESS…QEAP) and 869-879 (EATSGVFTDLS). Low complexity-rich tracts occupy residues 904–918 (PDSL…SASD) and 981–993 (PLLS…LSKK). Over residues 1015–1030 (PEKHSGIQDSQKEQDL) the composition is skewed to basic and acidic residues. Ser1035 is subject to Phosphoserine. A compositionally biased stretch (polar residues) spans 1037–1053 (GHQSVQAFPRSAVSSEV). The span at 1072 to 1083 (PLGAQGPVGVQP) shows a compositional bias: low complexity. Residues 1104 to 1132 (GSGTEPQGPSGQLSGRAQQGQMGNPSTPR) show a composition bias toward polar residues. Over residues 1150 to 1164 (PEEDEDTEDSEESDE) the composition is skewed to acidic residues. The residue at position 1156 (Thr1156) is a Phosphothreonine. Phosphoserine is present on residues Ser1159, Ser1162, Ser1175, Ser1178, and Ser1253. Gly residues predominate over residues 1354–1365 (PAAGAGGRYTEA).

It belongs to the protein kinase superfamily. Tyr protein kinase family. Interacts with CDK5. In terms of processing, autophosphorylated. Phosphorylated by CDK5. As to expression, expressed in brain, and, to a lower extent, in kidney, heart, lung and skeletal muscle. In the brain, expressed in the olfactory bulb, cerebellum, striatum, hippocampal formation, thalamus, hypothalamus, and pontine nuclei (at protein level).

The protein localises to the membrane. It is found in the cytoplasm. The protein resides in the perinuclear region. It localises to the cell projection. Its subcellular location is the dendrite. The protein localises to the axon. It is found in the growth cone. It catalyses the reaction L-seryl-[protein] + ATP = O-phospho-L-seryl-[protein] + ADP + H(+). The catalysed reaction is L-threonyl-[protein] + ATP = O-phospho-L-threonyl-[protein] + ADP + H(+). In terms of biological role, may be involved in neuronal differentiation. The chain is Serine/threonine-protein kinase LMTK1 (Aatk) from Mus musculus (Mouse).